Reading from the N-terminus, the 477-residue chain is UDP-sulfoquinovose synthase, chloroplastic (477 aa).

A disordered region spans residues 1 to 21; sequence MAHLLSASCPSVISLSSSSSK. The N-terminal 86 residues, 1–86, are a transit peptide targeting the chloroplast; that stretch reads MAHLLSASCP…TNNSSSKPKR (86 aa). NAD(+)-binding positions include 95-96, 115-119, 158-159, Arg-184, and Asn-202; these read YC, DNLVR, and DI. Substrate is bound at residue Arg-184. 2 residues coordinate substrate: Thr-228 and Tyr-265. Thr-228 is a catalytic residue. Tyr-265 and Lys-269 together coordinate NAD(+). Tyr-265 functions as the Proton acceptor in the catalytic mechanism. The active site involves Lys-269. Position 292 (Gln-292) interacts with substrate. Val-295 is an NAD(+) binding site. Residues 322-325, 337-339, and 410-412 each bind substrate; these read ALNR, TVY, and RVE.

Belongs to the NAD(P)-dependent epimerase/dehydratase family. In terms of assembly, homodimer. Requires NAD(+) as cofactor.

It localises to the plastid. It is found in the chloroplast. It carries out the reaction sulfite + UDP-alpha-D-glucose + H(+) = UDP-alpha-D-6-sulfoquinovose + H2O. Concentrations above 100 uM sulfite inhibit the reaction. Its function is as follows. Involved in the biosynthesis of sulfolipids found in thylakoid membranes. Converts UDP-glucose and sulfite to the sulfolipid head group precursor UDP-sulfoquinovose. This chain is UDP-sulfoquinovose synthase, chloroplastic (SQD1), found in Arabidopsis thaliana (Mouse-ear cress).